Here is a 275-residue protein sequence, read N- to C-terminus: Putative replication protein (275 aa).

Residues 98-198 form the BRCT domain; it reads SKAICFTPYD…RILKISEDYF (101 aa).

This Wigglesworthia glossinidia brevipalpis protein is Putative replication protein.